A 338-amino-acid polypeptide reads, in one-letter code: D-erythrose-4-phosphate dehydrogenase (338 aa).

Arg11–Ile12 is an NAD(+) binding site. Residues Ser153 to Thr155, Arg199, Thr212 to Lys213, and Arg235 contribute to the substrate site. The active-site Nucleophile is the Cys154. An NAD(+)-binding site is contributed by Asn317.

This sequence belongs to the glyceraldehyde-3-phosphate dehydrogenase family. Epd subfamily. Homotetramer.

It is found in the cytoplasm. It catalyses the reaction D-erythrose 4-phosphate + NAD(+) + H2O = 4-phospho-D-erythronate + NADH + 2 H(+). Its pathway is cofactor biosynthesis; pyridoxine 5'-phosphate biosynthesis; pyridoxine 5'-phosphate from D-erythrose 4-phosphate: step 1/5. In terms of biological role, catalyzes the NAD-dependent conversion of D-erythrose 4-phosphate to 4-phosphoerythronate. The sequence is that of D-erythrose-4-phosphate dehydrogenase from Shewanella piezotolerans (strain WP3 / JCM 13877).